Consider the following 928-residue polypeptide: Mating-type protein A-alpha Y4 (928 aa).

A DNA-binding region (homeobox) is located at residues G152–L211. 5 disordered regions span residues K255–P296, D310–N329, T340–P359, Y406–S451, and A626–L736. The span at E344 to P353 shows a compositional bias: basic residues. The segment covering K635–R657 has biased composition (basic and acidic residues). Low complexity-rich tracts occupy residues S668 to R682 and E694 to G728.

It localises to the nucleus. Functionally, specifies A-alpha-4 mating-type. May regulate the expression of genes specific to the homokaryotic cell type. This chain is Mating-type protein A-alpha Y4, found in Schizophyllum commune (Split gill fungus).